The sequence spans 360 residues: Putative beta-glucosidase 15 (360 aa).

2 stretches are compositionally biased toward basic and acidic residues: residues 1-11 (MARRRMGEEGK) and 47-67 (GRRE…ERKG). 2 disordered regions span residues 1 to 21 (MARR…NGRQ) and 35 to 103 (GWRS…RAER). The span at 75 to 86 (GKRRRERRRGGR) shows a compositional bias: basic residues. Tyrosine 183 provides a ligand contact to a beta-D-glucoside. Residues cysteine 191 and cysteine 196 are joined by a disulfide bond. Residues glutamate 254, tryptophan 301, 308–309 (EW), and phenylalanine 317 contribute to the a beta-D-glucoside site. Glutamate 254 functions as the Nucleophile in the catalytic mechanism. N-linked (GlcNAc...) asparagine glycosylation occurs at asparagine 346.

The protein belongs to the glycosyl hydrolase 1 family.

The enzyme catalyses Hydrolysis of terminal, non-reducing beta-D-glucosyl residues with release of beta-D-glucose.. The protein is Putative beta-glucosidase 15 (BGLU15) of Oryza sativa subsp. japonica (Rice).